Here is a 463-residue protein sequence, read N- to C-terminus: Glutamate-1-semialdehyde 2,1-aminomutase, chloroplastic (463 aa).

A chloroplast-targeting transit peptide spans methionine 1–alanine 30. Lysine 303 bears the N6-(pyridoxal phosphate)lysine mark.

The protein belongs to the class-III pyridoxal-phosphate-dependent aminotransferase family. HemL subfamily. In terms of assembly, homodimer. It depends on pyridoxal 5'-phosphate as a cofactor.

The protein localises to the plastid. It is found in the chloroplast. It carries out the reaction (S)-4-amino-5-oxopentanoate = 5-aminolevulinate. It participates in porphyrin-containing compound metabolism; protoporphyrin-IX biosynthesis; 5-aminolevulinate from L-glutamyl-tRNA(Glu): step 2/2. It functions in the pathway porphyrin-containing compound metabolism; chlorophyll biosynthesis. In Chlamydomonas reinhardtii (Chlamydomonas smithii), this protein is Glutamate-1-semialdehyde 2,1-aminomutase, chloroplastic (GSA).